The chain runs to 621 residues: Cryptochrome-1 (621 aa).

A Photolyase/cryptochrome alpha/beta domain is found at 3 to 132; the sequence is VNAVHWFRKG…EVIVRISHTL (130 aa). 3 short sequence motifs (LIR) span residues 50–54, 82–87, and 151–156; these read NRWRF, DVFPRL, and KRFQTL. Residue Ser252 participates in FAD binding. 4 consecutive short sequence motifs (LIR) follow at residues 255–260, 271–276, 285–290, and 335–339; these read LRFGCL, DLYKKV, SLYGQL, and TGFPW. Gln289 is an FAD binding site. His355 serves as a coordination point for FAD. Positions 379–384 match the LIR 8 motif; the sequence is KVFEEL. 387–389 is an FAD binding site; the sequence is DAD. 5 short sequence motifs (LIR) span residues 395–400, 411–416, 430–435, 486–491, and 492–497; these read GSWMWL, HCYCPV, RRYLPV, QIYQQL, and SRYRGL. The segment at 581-621 is disordered; that stretch reads QSHLMQPGRASLGTGISAGKRPNPEEETQSVGPKVQRQSTN.

Belongs to the DNA photolyase class-1 family. In terms of assembly, component of the circadian core oscillator, which includes the CRY proteins, CLOCK or NPAS2, BMAL1 or BMAL2, CSNK1E, and the PER proteins. Requires FAD as cofactor. (6R)-5,10-methylene-5,6,7,8-tetrahydrofolate serves as cofactor. In terms of tissue distribution, expressed in the pineal gland.

It localises to the cytoplasm. Its subcellular location is the nucleus. Its function is as follows. Transcriptional repressor which forms a core component of the circadian clock. The circadian clock, an internal time-keeping system, regulates various physiological processes through the generation of approximately 24 hour circadian rhythms in gene expression, which are translated into rhythms in metabolism and behavior. It is derived from the Latin roots 'circa' (about) and 'diem' (day) and acts as an important regulator of a wide array of physiological functions including metabolism, sleep, body temperature, blood pressure, endocrine, immune, cardiovascular, and renal function. Consists of two major components: the central clock, residing in the suprachiasmatic nucleus (SCN) of the brain, and the peripheral clocks that are present in nearly every tissue and organ system. Both the central and peripheral clocks can be reset by environmental cues, also known as Zeitgebers (German for 'timegivers'). The predominant Zeitgeber for the central clock is light, which is sensed by retina and signals directly to the SCN. The central clock entrains the peripheral clocks through neuronal and hormonal signals, body temperature and feeding-related cues, aligning all clocks with the external light/dark cycle. Circadian rhythms allow an organism to achieve temporal homeostasis with its environment at the molecular level by regulating gene expression to create a peak of protein expression once every 24 hours to control when a particular physiological process is most active with respect to the solar day. Transcription and translation of core clock components (CLOCK, NPAS2, BMAL1, BMAL2, PER1, PER2, PER3, CRY1 and CRY2) plays a critical role in rhythm generation, whereas delays imposed by post-translational modifications (PTMs) are important for determining the period (tau) of the rhythms (tau refers to the period of a rhythm and is the length, in time, of one complete cycle). A diurnal rhythm is synchronized with the day/night cycle, while the ultradian and infradian rhythms have a period shorter and longer than 24 hours, respectively. Disruptions in the circadian rhythms contribute to the pathology of cardiovascular diseases, cancer, metabolic syndromes and aging. A transcription/translation feedback loop (TTFL) forms the core of the molecular circadian clock mechanism. Transcription factors, CLOCK or NPAS2 and BMAL1 or BMAL2, form the positive limb of the feedback loop, act in the form of a heterodimer and activate the transcription of core clock genes and clock-controlled genes (involved in key metabolic processes), harboring E-box elements (5'-CACGTG-3') within their promoters. The core clock genes: PER1/2/3 and CRY1/2 which are transcriptional repressors form the negative limb of the feedback loop and interact with the CLOCK|NPAS2-BMAL1|BMAL2 heterodimer inhibiting its activity and thereby negatively regulating their own expression. This heterodimer also activates nuclear receptors NR1D1/2 and RORA/B/G, which form a second feedback loop and which activate and repress BMAL1 transcription, respectively. CRY1 and CRY2 have redundant functions but also differential and selective contributions at least in defining the pace of the SCN circadian clock and its circadian transcriptional outputs. More potent transcriptional repressor in cerebellum and liver than CRY2, though more effective in lengthening the period of the SCN oscillator. On its side, CRY2 seems to play a critical role in tuning SCN circadian period by opposing the action of CRY1. With CRY2, is dispensable for circadian rhythm generation but necessary for the development of intercellular networks for rhythm synchrony. Capable of translocating circadian clock core proteins such as PER proteins to the nucleus. Interacts with CLOCK-BMAL1 independently of PER proteins and is found at CLOCK-BMAL1-bound sites, suggesting that CRY may act as a molecular gatekeeper to maintain CLOCK-BMAL1 in a poised and repressed state until the proper time for transcriptional activation. Represses CLOCK-BMAL1-mediated transcriptional activation. This is Cryptochrome-1 (CRY1) from Gallus gallus (Chicken).